The primary structure comprises 56 residues: Protein hunchback (56 aa).

C2H2-type zinc fingers lie at residues 1–5 (HLRNH), 11–33 (FKCDKCSYSCVNKSMLNSHLKSH), and 39–56 (FRCSDCAYATKYCHSLKL).

The protein belongs to the hunchback C2H2-type zinc-finger protein family.

The protein localises to the nucleus. In terms of biological role, gap class segmentation protein that controls development of head structures. The protein is Protein hunchback (hb) of Euscelis plebejus (Leafhopper).